A 523-amino-acid chain; its full sequence is 3-hydroxybenzoate--CoA/4-hydroxybenzoate--CoA ligase (523 aa).

It belongs to the ATP-dependent AMP-binding enzyme family. Benzoate-CoA ligase subfamily.

It carries out the reaction 4-hydroxybenzoate + ATP + CoA = 4-hydroxybenzoyl-CoA + AMP + diphosphate. It catalyses the reaction 3-hydroxybenzoate + ATP + CoA = 3-hydroxybenzoyl-CoA + AMP + diphosphate. Functionally, catalyzes the ligation of 3-hydroxybenzoate or 4-hydroxybenzoate and CoA at the expense of ATP. The enzyme shows low activity towards benzoate, 4-aminobenzoate, 3-aminobenzoate, 3-fluorobenzoate, 4-fluorobenzoate, 3-chlorobenzoate, and 4-chlorobenzoate. There is no activity with 3,4-dihydroxybenzoate, 2,3-dihydroxybenzoate, and 2-hydroxybenzoate as substrates. In Thauera aromatica, this protein is 3-hydroxybenzoate--CoA/4-hydroxybenzoate--CoA ligase (hcl).